The chain runs to 362 residues: RNA-binding protein 4 (362 aa).

2 consecutive RRM domains span residues 2-72 (VKLF…ASKN) and 78-148 (TKLH…LSTS). A Glycyl lysine isopeptide (Lys-Gly) (interchain with G-Cter in SUMO2) cross-link involves residue Lys79. A Phosphoserine modification is found at Ser86. Residue Lys92 forms a Glycyl lysine isopeptide (Lys-Gly) (interchain with G-Cter in SUMO2) linkage. A CCHC-type zinc finger spans residues 160 to 177 (SGCYRCGKEGHWSKECPV). The tract at residues 196–362 (AVRTPYTMGY…YADRARYSAF (167 aa)) is interaction with TNPO3. Residues 306–336 (RSPLRRATGPVPTVGEGYGYGHESELSQGSS) form a disordered region. The residue at position 307 (Ser307) is a Phosphoserine.

Interacts with TNPO3; the interaction mediates nuclear import of the protein and is disrupted by nuclear Ran bound to GTP. Interacts with EIF4G1 and WT1. Interacts with EIF4A1; the interaction is modulated under stress-induced conditions. Interacts with AGO1. Interacts with AGO2; the interaction occurs under both cell proliferation and differentiation conditions and in an RNA- and phosphorylation-independent manner. Interacts with DDX5; the interaction occurs in an RNA-independent manner. Interacts with RBPMS; the interaction allows cooperative assembly of RNA-bound stable cell-specific alternative splicing regulatory complexes. Post-translationally, phosphorylated. Phosphorylated in vitro on Ser-307 by SRPK1. Phosphorylation on Ser-307 is induced upon cell stress signaling, which alters its subcellular localization and may modulate its activity on IRES-mediated mRNA translation. Phosphorylation on Ser-307 is induced upon cell muscle differentiation.

The protein resides in the nucleus. It is found in the nucleolus. It localises to the nucleus speckle. The protein localises to the cytoplasm. Its subcellular location is the cytoplasmic granule. In terms of biological role, RNA-binding factor involved in multiple aspects of cellular processes like alternative splicing of pre-mRNA and translation regulation. Modulates alternative 5'-splice site and exon selection. Acts as a muscle cell differentiation-promoting factor. Activates exon skipping of the PTB pre-mRNA during muscle cell differentiation. Antagonizes the activity of the splicing factor PTBP1 to modulate muscle cell-specific exon selection of alpha tropomyosin. Binds to intronic pyrimidine-rich sequence of the TPM1 and MAPT pre-mRNAs. Required for the translational activation of PER1 mRNA in response to circadian clock. Binds directly to the 3'-UTR of the PER1 mRNA. Exerts a suppressive activity on Cap-dependent translation via binding to CU-rich responsive elements within the 3'UTR of mRNAs, a process increased under stress conditions or during myocytes differentiation. Recruits EIF4A1 to stimulate IRES-dependent translation initiation in respons to cellular stress. Associates to internal ribosome entry segment (IRES) in target mRNA species under stress conditions. Plays a role for miRNA-guided RNA cleavage and translation suppression by promoting association of AGO2-containing miRNPs with their cognate target mRNAs. Associates with miRNAs during muscle cell differentiation. Binds preferentially to 5'-CGCGCG[GCA]-3' motif in vitro. This Bos taurus (Bovine) protein is RNA-binding protein 4 (RBM4).